A 231-amino-acid polypeptide reads, in one-letter code: 7-cyano-7-deazaguanine synthase (231 aa).

11–21 provides a ligand contact to ATP; that stretch reads LSGGLDSATTM. Residues cysteine 195, cysteine 205, cysteine 208, and cysteine 211 each contribute to the Zn(2+) site.

This sequence belongs to the QueC family. Zn(2+) is required as a cofactor.

It carries out the reaction 7-carboxy-7-deazaguanine + NH4(+) + ATP = 7-cyano-7-deazaguanine + ADP + phosphate + H2O + H(+). It participates in purine metabolism; 7-cyano-7-deazaguanine biosynthesis. Catalyzes the ATP-dependent conversion of 7-carboxy-7-deazaguanine (CDG) to 7-cyano-7-deazaguanine (preQ(0)). In Syntrophus aciditrophicus (strain SB), this protein is 7-cyano-7-deazaguanine synthase.